Reading from the N-terminus, the 62-residue chain is Prokaryotic ubiquitin-like protein Pup (62 aa).

The tract at residues 1–36 (MEKSSQIHGSKPGDDNADEPENAAGQSQIRKQGADD) is disordered. Positions 18–56 (DEPENAAGQSQIRKQGADDLLDEIDGLLESNAEEFVRSY) are ARC ATPase binding. Gln-62 is modified (deamidated glutamine). An Isoglutamyl lysine isopeptide (Gln-Lys) (interchain with K-? in acceptor proteins) cross-link involves residue Gln-62.

The protein belongs to the prokaryotic ubiquitin-like protein family. In terms of assembly, strongly interacts with the proteasome-associated ATPase ARC through a hydrophobic interface; the interacting region of Pup lies in its C-terminal half. There is one Pup binding site per ARC hexamer ring. In terms of processing, is modified by deamidation of its C-terminal glutamine to glutamate by the deamidase Dop, a prerequisite to the subsequent pupylation process.

It participates in protein degradation; proteasomal Pup-dependent pathway. Its function is as follows. Protein modifier that is covalently attached to lysine residues of substrate proteins, thereby targeting them for proteasomal degradation. The tagging system is termed pupylation. The polypeptide is Prokaryotic ubiquitin-like protein Pup (Corynebacterium kroppenstedtii (strain DSM 44385 / JCM 11950 / CIP 105744 / CCUG 35717)).